A 434-amino-acid chain; its full sequence is 3-phosphoshikimate 1-carboxyvinyltransferase (434 aa).

Residues K22, S23, and R27 each contribute to the 3-phosphoshikimate site. K22 provides a ligand contact to phosphoenolpyruvate. 2 residues coordinate phosphoenolpyruvate: G93 and R121. S168, S169, Q170, S199, D320, and K347 together coordinate 3-phosphoshikimate. Q170 contacts phosphoenolpyruvate. The active-site Proton acceptor is D320. Phosphoenolpyruvate is bound by residues R351, R394, and K419.

Belongs to the EPSP synthase family. In terms of assembly, monomer.

It localises to the cytoplasm. The catalysed reaction is 3-phosphoshikimate + phosphoenolpyruvate = 5-O-(1-carboxyvinyl)-3-phosphoshikimate + phosphate. It participates in metabolic intermediate biosynthesis; chorismate biosynthesis; chorismate from D-erythrose 4-phosphate and phosphoenolpyruvate: step 6/7. Functionally, catalyzes the transfer of the enolpyruvyl moiety of phosphoenolpyruvate (PEP) to the 5-hydroxyl of shikimate-3-phosphate (S3P) to produce enolpyruvyl shikimate-3-phosphate and inorganic phosphate. This Burkholderia lata (strain ATCC 17760 / DSM 23089 / LMG 22485 / NCIMB 9086 / R18194 / 383) protein is 3-phosphoshikimate 1-carboxyvinyltransferase.